Consider the following 307-residue polypeptide: MLEKYLEISKEVSEALKENKPVVALESTIISHGMPYPKNAETALNVEKIIRDKGAIPATIAILNGKLKVGLTKDEIEYLGKKGKEVVKTSRRDIPFILAKKLDGATTVASTMIVANLAGIKVFGTGGIGGVHRGAQESFDISADLQELANTNVAVVCAGAKSILDIGLTLEYLETQGVPVVGFGTEELPAFYTRKSGFKVDYRVDTAKELAEALKAKWDLGLKGGMVVGNPIPEEYQMDYDTITKAINDAVKEAEEKGIKGKESTPFLLAKVKDITKGKSLEANIQLVYNNVAVASDLAIELSKLNK.

Glu-26 acts as the Proton donor in catalysis. Lys-88 and Val-108 together coordinate substrate. Asp-140 provides a ligand contact to Mn(2+). 142-144 (SAD) provides a ligand contact to substrate. Lys-161 (nucleophile) is an active-site residue.

The protein belongs to the pseudouridine-5'-phosphate glycosidase family. As to quaternary structure, homotrimer. It depends on Mn(2+) as a cofactor.

It catalyses the reaction D-ribose 5-phosphate + uracil = psi-UMP + H2O. Catalyzes the reversible cleavage of pseudouridine 5'-phosphate (PsiMP) to ribose 5-phosphate and uracil. Functions biologically in the cleavage direction, as part of a pseudouridine degradation pathway. The sequence is that of Pseudouridine-5'-phosphate glycosidase from Clostridium botulinum (strain Langeland / NCTC 10281 / Type F).